We begin with the raw amino-acid sequence, 78 residues long: Myrmicitoxin-Ta2a (78 aa).

A signal peptide spans Met-1–Ala-26. The propeptide occupies Lys-27–Ala-56. The residue at position 77 (Lys-77) is a Lysine amide.

The protein belongs to the formicidae venom precursor-01 superfamily. In terms of tissue distribution, expressed by the venom gland.

Its subcellular location is the secreted. In terms of biological role, peptide with toxicity towards insects that may also act as antimicrobial peptide. Causes calcium influx in F11 cells (EC(50)=5.8 nM), possibly by modulating sodium channels (Nav). In vivo, is lethal to insects, but does not show toxicity to vertebrates. Intraplantar injection into mice does not induce spontaneous nocifensive behaviors up to a dose of 200 pmol. In Tetramorium africanum (Fierce ant), this protein is Myrmicitoxin-Ta2a.